The chain runs to 202 residues: Snake venom metalloproteinase atroxlysin-1 (202 aa).

A Peptidase M12B domain is found at 6 to 202; that stretch reads RYVDLFIVVD…ENPQCILNKR (197 aa). Ca(2+) is bound by residues Asp9 and Asp93. 3 disulfide bridges follow: Cys117-Cys197, Cys157-Cys181, and Cys159-Cys164. A Zn(2+)-binding site is contributed by His142. Glu143 is an active-site residue. His146 and His152 together coordinate Zn(2+). Residues Cys197 and Asn200 each coordinate Ca(2+).

The protein belongs to the venom metalloproteinase (M12B) family. P-I subfamily. Monomer. Zn(2+) is required as a cofactor. In terms of tissue distribution, expressed by the venom gland.

It localises to the secreted. With respect to regulation, inhibited by EDTA, DTT and high concentrations of zinc ions (&gt;2 mM). Weakly inhibited by TLCK. Not inhibited by PMSF. Activated by calcium ions. In terms of biological role, snake venom zinc metalloproteinase that acts on fibrinogen, fibrin, fibronectin (FN1), type I collagen, type IV collagen, integrin alpha-7/beta-1 (ITGA7/ITGB1) and integrin alpha-1/beta-1 (ITGA1/ITGB1). Binds to fibronectin (FN1), fibrinogen and, weakly, to type I collagen and laminin. Cleaves Xaa-Leu bonds. Inhibits ADP- and collagen-induced platelet aggregation both in the presence (IC(50)=1.4 uM for collagen) and in the absence (IC(50)=2.2 uM for collagen) of cofactors. Has hemorrhagic activity. The chain is Snake venom metalloproteinase atroxlysin-1 from Bothrops atrox (Barba amarilla).